The primary structure comprises 369 residues: Cyanuric acid amidohydrolase (369 aa).

An RU A region spans residues 1–100 (MPRRAEILRL…HWLVIAAREA (100 aa)). Substrate is bound by residues R53 and 81–82 (SG). Residues 106 to 242 (ALAVGQARTP…HEVVVMGMSP (137 aa)) form an RU B region. K155 is an active-site residue. Substrate-binding positions include R187 and 225–226 (SA). S225 (nucleophile) is an active-site residue. Positions 248-369 (LVIDHAVMAD…ARRSGAAGPA (122 aa)) are RU C. E296 provides a ligand contact to Mg(2+). Substrate-binding positions include R323 and 342 to 343 (SG). Residues A345, Q348, G349, P350, and G353 each contribute to the Mg(2+) site.

It belongs to the cyclic amide hydrolase (CyAH) family. As to quaternary structure, homotetramer.

It catalyses the reaction cyanurate + H2O = 1-carboxybiuret + H(+). It functions in the pathway xenobiotic degradation; atrazine degradation; biuret from cyanurate: step 1/1. Inhibited by barbituric acid. Its function is as follows. Responsible for the hydrolysis of cyanuric acid, an intermediate formed during catabolism of s-triazine based compounds in herbicides such as atrazine and polymers such as melamine. Catalyzes the hydrolytic opening of the s-triazine ring of cyanuric acid (2,4,6-trihydroxy-s-triazine) to yield carbon dioxide and carboxybiuret, which spontaneously decarboxylates to biuret. The sequence is that of Cyanuric acid amidohydrolase from Methylobacterium sp. (strain 4-46).